The following is a 567-amino-acid chain: Urease subunit alpha (567 aa).

Residues 129–567 (GGVDTHIHWI…LPMAQRYFLF (439 aa)) form the Urease domain. Residues His134, His136, and Lys217 each contribute to the Ni(2+) site. Position 217 is an N6-carboxylysine (Lys217). Position 219 (His219) interacts with substrate. Ni(2+) contacts are provided by His246 and His272. His320 serves as the catalytic Proton donor. Asp360 contributes to the Ni(2+) binding site.

The protein belongs to the metallo-dependent hydrolases superfamily. Urease alpha subunit family. In terms of assembly, heterotrimer of UreA (gamma), UreB (beta) and UreC (alpha) subunits. Three heterotrimers associate to form the active enzyme. Ni cation serves as cofactor. Post-translationally, carboxylation allows a single lysine to coordinate two nickel ions.

The protein localises to the cytoplasm. The catalysed reaction is urea + 2 H2O + H(+) = hydrogencarbonate + 2 NH4(+). Its pathway is nitrogen metabolism; urea degradation; CO(2) and NH(3) from urea (urease route): step 1/1. This is Urease subunit alpha from Escherichia coli O157:H7.